We begin with the raw amino-acid sequence, 232 residues long: Alpha N-terminal protein methyltransferase 1 (232 aa).

S-adenosyl-L-methionine-binding positions include Gly71, Arg76, 123–124 (MQ), and Gln139.

This sequence belongs to the methyltransferase superfamily. NTM1 family.

It is found in the cytoplasm. The enzyme catalyses N-terminal L-alanyl-L-prolyl-L-lysyl-[protein] + 3 S-adenosyl-L-methionine = N-terminal N,N,N-trimethyl-L-alanyl-L-prolyl-L-lysyl-[protein] + 3 S-adenosyl-L-homocysteine + 3 H(+). The catalysed reaction is N-terminal L-seryl-L-prolyl-L-lysyl-[protein] + 3 S-adenosyl-L-methionine = N-terminal N,N,N-trimethyl-L-seryl-L-prolyl-L-lysyl-[protein] + 3 S-adenosyl-L-homocysteine + 3 H(+). It carries out the reaction N-terminal L-prolyl-L-prolyl-L-lysyl-[protein] + 2 S-adenosyl-L-methionine = N-terminal N,N-dimethyl-L-prolyl-L-prolyl-L-lysyl-[protein] + 2 S-adenosyl-L-homocysteine + 2 H(+). Functionally, alpha-N-methyltransferase that methylates the N-terminus of target proteins containing the N-terminal motif [Ala/Pro/Ser]-Pro-Lys when the initiator Met is cleaved. Specifically catalyzes mono-, di- or tri-methylation of exposed alpha-amino group of Ala or Ser residue in the [Ala/Ser]-Pro-Lys motif and mono- or di-methylation of Pro in the Pro-Pro-Lys motif. Responsible for the N-terminal methylation of the ribosomal proteins RPL12A, RPL12B, RPS25A and RPS25B. This chain is Alpha N-terminal protein methyltransferase 1 (TAE1), found in Saccharomyces cerevisiae (strain ATCC 204508 / S288c) (Baker's yeast).